Here is a 191-residue protein sequence, read N- to C-terminus: UPF0312 protein Shewmr4_1178 (191 aa).

The signal sequence occupies residues 1-22 (MKKQLLAALIGGSLLAPMAASA).

Belongs to the UPF0312 family. Type 1 subfamily.

The protein resides in the periplasm. In Shewanella sp. (strain MR-4), this protein is UPF0312 protein Shewmr4_1178.